The primary structure comprises 637 residues: Probable potassium transport system protein Kup (637 aa).

Helical transmembrane passes span Ile25–Ile45, Val62–Leu82, Trp115–Thr135, Ile149–Leu169, Val180–Leu200, Leu227–Tyr247, Ile263–Phe283, Leu295–Ala315, Ile352–Phe372, Leu378–Tyr398, Leu410–Ser430, and Leu434–Thr454.

This sequence belongs to the HAK/KUP transporter (TC 2.A.72) family.

The protein localises to the cell inner membrane. It carries out the reaction K(+)(in) + H(+)(in) = K(+)(out) + H(+)(out). Its function is as follows. Transport of potassium into the cell. Likely operates as a K(+):H(+) symporter. The polypeptide is Probable potassium transport system protein Kup (Chlorobium phaeobacteroides (strain DSM 266 / SMG 266 / 2430)).